The chain runs to 396 residues: Elongation factor Tu (396 aa).

A tr-type G domain is found at 11-205; that stretch reads KPHVNIGTIG…TVDEYIPTPE (195 aa). The interval 20–27 is G1; sequence GHVDHGKT. 20–27 is a binding site for GTP; the sequence is GHVDHGKT. Thr27 contributes to the Mg(2+) binding site. The G2 stretch occupies residues 61–65; sequence GITIN. The interval 82–85 is G3; it reads DAPG. GTP is bound by residues 82 to 86 and 137 to 140; these read DAPGH and NKVD. The G4 stretch occupies residues 137–140; the sequence is NKVD. The tract at residues 175 to 177 is G5; the sequence is SAL.

It belongs to the TRAFAC class translation factor GTPase superfamily. Classic translation factor GTPase family. EF-Tu/EF-1A subfamily. In terms of assembly, monomer.

It localises to the cytoplasm. It carries out the reaction GTP + H2O = GDP + phosphate + H(+). GTP hydrolase that promotes the GTP-dependent binding of aminoacyl-tRNA to the A-site of ribosomes during protein biosynthesis. The sequence is that of Elongation factor Tu from Lactobacillus gasseri (strain ATCC 33323 / DSM 20243 / BCRC 14619 / CIP 102991 / JCM 1131 / KCTC 3163 / NCIMB 11718 / NCTC 13722 / AM63).